Consider the following 424-residue polypeptide: CinA-like protein (424 aa).

This sequence belongs to the CinA family.

This chain is CinA-like protein, found in Shewanella frigidimarina (strain NCIMB 400).